The chain runs to 491 residues: Probable cytosol aminopeptidase (491 aa).

Lysine 264 and aspartate 269 together coordinate Mn(2+). Residue lysine 276 is part of the active site. Mn(2+) is bound by residues aspartate 287, aspartate 346, and glutamate 348. Arginine 350 is a catalytic residue.

Belongs to the peptidase M17 family. Mn(2+) is required as a cofactor.

It is found in the cytoplasm. It catalyses the reaction Release of an N-terminal amino acid, Xaa-|-Yaa-, in which Xaa is preferably Leu, but may be other amino acids including Pro although not Arg or Lys, and Yaa may be Pro. Amino acid amides and methyl esters are also readily hydrolyzed, but rates on arylamides are exceedingly low.. It carries out the reaction Release of an N-terminal amino acid, preferentially leucine, but not glutamic or aspartic acids.. Its function is as follows. Presumably involved in the processing and regular turnover of intracellular proteins. Catalyzes the removal of unsubstituted N-terminal amino acids from various peptides. This chain is Probable cytosol aminopeptidase, found in Xylella fastidiosa (strain Temecula1 / ATCC 700964).